Here is a 217-residue protein sequence, read N- to C-terminus: MKFFVDTADVAAIRELNDLGMVDGVTTNPSLILKSGRDILEVTKEICDIVEGPVSAEVVASKAGDMIREGEHLVKIAPNITVKVPLTWDGLRACKVLSSQGHKVNVTLCFSAAQAILAAKAGATFISPFIGRLDDINFDGMELIAQIREIYDNYDFQTQILAASIRSVNHITDAARIGADVITAPPAVIKAMANHVLTDKGLEQFNADWAKTGQKIV.

K83 acts as the Schiff-base intermediate with substrate in catalysis.

It belongs to the transaldolase family. Type 3B subfamily.

It is found in the cytoplasm. The catalysed reaction is D-sedoheptulose 7-phosphate + D-glyceraldehyde 3-phosphate = D-erythrose 4-phosphate + beta-D-fructose 6-phosphate. It functions in the pathway carbohydrate degradation; pentose phosphate pathway; D-glyceraldehyde 3-phosphate and beta-D-fructose 6-phosphate from D-ribose 5-phosphate and D-xylulose 5-phosphate (non-oxidative stage): step 2/3. Functionally, transaldolase is important for the balance of metabolites in the pentose-phosphate pathway. This is Probable transaldolase from Paracoccus denitrificans (strain Pd 1222).